Consider the following 816-residue polypeptide: Protein kinase C-binding protein NELL2 (816 aa).

Positions 1–21 (MESRVLLRTFCLIFGLGAVWG) are cleaved as a signal peptide. 4 N-linked (GlcNAc...) asparagine glycosylation sites follow: asparagine 53, asparagine 225, asparagine 293, and asparagine 298. The 165-residue stretch at 64 to 228 (PRSIKASTAT…AQCPDLNRTC (165 aa)) folds into the Laminin G-like domain. The VWFC 1 domain occupies 272-331 (RTCTMKGTTYREFESWIDGCKNCTCLNGTIQCETLICPNPDCPLKSALAYVDGKCCKECK). Residues 397 to 439 (GYDFCSERHNCMENSICRNLNDRAVCSCRDGFRALREDNAYCE) form the EGF-like 1 domain. Cystine bridges form between cysteine 401-cysteine 413, cysteine 407-cysteine 422, and cysteine 424-cysteine 438. Ca(2+) contacts are provided by aspartate 440, isoleucine 441, and glutamate 443. Residues 440 to 481 (DIDECAEGRHYCRENTMCVNTPGSFMCICKTGYIRIDDYSCT) enclose the EGF-like 2; calcium-binding domain. Cystine bridges form between cysteine 444-cysteine 457, cysteine 451-cysteine 466, cysteine 468-cysteine 480, cysteine 486-cysteine 499, cysteine 493-cysteine 508, cysteine 510-cysteine 521, cysteine 525-cysteine 535, cysteine 529-cysteine 541, and cysteine 543-cysteine 552. 3 residues coordinate Ca(2+): asparagine 459, threonine 460, and serine 463. The EGF-like 3; calcium-binding domain maps to 482 to 522 (EHDECITNQHNCDENALCFNTVGGHNCVCKPGYTGNGTTCK). Asparagine 517 carries N-linked (GlcNAc...) asparagine glycosylation. Residues 523 to 553 (AFCKDGCRNGGACIAANVCACPQGFTGPSCE) form the EGF-like 4 domain. Residue threonine 548 is glycosylated (O-linked (GlcNAc...) threonine). Ca(2+) contacts are provided by aspartate 555, isoleucine 556, and glutamate 558. In terms of domain architecture, EGF-like 5; calcium-binding spans 555-601 (DIDECSDGFVQCDSRANCINLPGWYHCECRDGYHDNGMFSPSGESCE). 3 disulfides stabilise this stretch: cysteine 559–cysteine 572, cysteine 566–cysteine 581, and cysteine 583–cysteine 600. Residues asparagine 574, leucine 575, and tryptophan 578 each coordinate Ca(2+). 3 residues coordinate Ca(2+): aspartate 602, isoleucine 603, and glutamate 605. The EGF-like 6; calcium-binding domain occupies 602 to 637 (DIDECGTGRHSCANDTICFNLDGGYDCRCPHGKNCT). Intrachain disulfides connect cysteine 606–cysteine 619, cysteine 613–cysteine 628, and cysteine 630–cysteine 636. Residue asparagine 615 is glycosylated (N-linked (GlcNAc...) asparagine). Ca(2+)-binding residues include asparagine 621, leucine 622, and glycine 625. Asparagine 635 carries an N-linked (GlcNAc...) asparagine glycan. VWFC domains lie at 638 to 693 (GDCI…PECD) and 698 to 756 (SQCL…PRCV).

As to quaternary structure, homotrimer. Binds to PRKCB. Interacts with NICOL1; this interaction triggers epididymal differentiation. Interacts (via the EGF domains) with ROBO3 (via Fibronectin type-III 1 domain) with a 3:3 stoichiometry; this interaction promotes oligomerization of ROBO3 resulting in the repulsion of commissural axons in the midline.

The protein localises to the secreted. Functionally, plays multiple roles in neural tissues, regulates neuronal proliferation, survival, differentiation, polarization, as well as axon guidance and synaptic functions. Plays an important role in axon development during neuronal differentiation through the MAPK intracellular signaling pathway. Via binding to its receptor ROBO3, plays a role in axon guidance, functioning as a repulsive axon guidance cue that contributes to commissural axon guidance to the midline. Required for neuron survival through the modulation of MAPK signaling pathways too. Involved in the regulation of hypothalamic GNRH secretion and the control of puberty. Its function is as follows. Epididymal-secreted protein that signals through a ROS1-pathway to regulate the epididymal initial segment (IS) maturation, sperm maturation and male fertility. The sequence is that of Protein kinase C-binding protein NELL2 from Homo sapiens (Human).